The primary structure comprises 136 residues: Small ribosomal subunit protein uS8c (136 aa).

The protein belongs to the universal ribosomal protein uS8 family. In terms of assembly, part of the 30S ribosomal subunit.

The protein resides in the plastid. It localises to the chloroplast. Its function is as follows. One of the primary rRNA binding proteins, it binds directly to 16S rRNA central domain where it helps coordinate assembly of the platform of the 30S subunit. This is Small ribosomal subunit protein uS8c (rps8) from Hordeum vulgare (Barley).